Here is a 487-residue protein sequence, read N- to C-terminus: UDP-glucose flavonoid 3-O-glucosyltransferase 7 (487 aa).

His-23 functions as the Proton acceptor in the catalytic mechanism. His-23 contacts an anthocyanidin. Catalysis depends on Asp-121, which acts as the Charge relay. UDP-alpha-D-glucose is bound by residues Ala-345, Gln-347, His-362, Trp-365, Asn-366, Ser-367, and Glu-370. Residue Gly-385 participates in an anthocyanidin binding. UDP-alpha-D-glucose is bound by residues Glu-386 and Gln-387.

The protein belongs to the UDP-glycosyltransferase family. As to expression, strongly expressed in achenes and receptacles.

The enzyme catalyses a flavonol + UDP-alpha-D-glucose = a flavonol 3-O-beta-D-glucoside + UDP + H(+). Its function is as follows. Broad spectrum multifunctional glucosyltransferase. Catalyzes the formation of flavonol 3-O- and 4'-O-glucosides during fruit ripening. Accepted substrates include several flavonoids, hydroxycoumarins and beta-naphthols. Uses UDP-Glc as a sugar donor, but not UDP-Gal or UDP-GlcUA. May also be involved in detoxification of xenobiotics. The sequence is that of UDP-glucose flavonoid 3-O-glucosyltransferase 7 from Fragaria ananassa (Strawberry).